Consider the following 406-residue polypeptide: Arginine deiminase (406 aa).

The Amidino-cysteine intermediate role is filled by cysteine 396.

Belongs to the arginine deiminase family.

It localises to the cytoplasm. It carries out the reaction L-arginine + H2O = L-citrulline + NH4(+). The protein operates within amino-acid degradation; L-arginine degradation via ADI pathway; carbamoyl phosphate from L-arginine: step 1/2. This is Arginine deiminase from Vibrio campbellii (strain ATCC BAA-1116).